The following is a 567-amino-acid chain: Protein ESMERALDA 1 (567 aa).

Residues 1 to 41 are disordered; that stretch reads MLAKNRLPGSGHTTPSPPASPRRSPRYRHGRSKAAAGSRFP. Topologically, residues 1–65 are cytoplasmic; that stretch reads MLAKNRLPGS…ILLSVLLRRQ (65 aa). A compositionally biased stretch (basic residues) spans 23–32; the sequence is RSPRYRHGRS. A helical; Signal-anchor for type II membrane protein transmembrane segment spans residues 66–86; the sequence is GIFLFAPLIYISCMLLYMGTV. Residues 87–567 are Lumenal-facing; sequence SFDVVPIIQR…TPESRPPPAT (481 aa). Residues Asn121, Asn145, Asn184, and Asn238 are each glycosylated (N-linked (GlcNAc...) asparagine). Residue 331–333 coordinates substrate; that stretch reads HLR. N-linked (GlcNAc...) asparagine glycosylation is found at Asn403, Asn419, Asn449, Asn538, and Asn554.

This sequence belongs to the glycosyltransferase GT106 family. Ubiquitous.

It is found in the golgi apparatus membrane. Its pathway is protein modification; protein glycosylation. Glycosyltransferase that plays a role in cell adhesion. In Arabidopsis thaliana (Mouse-ear cress), this protein is Protein ESMERALDA 1.